Consider the following 308-residue polypeptide: Ornithine carbamoyltransferase (308 aa).

Residues 56–59 (STRT), Gln83, Arg107, and 134–137 (HPCQ) each bind carbamoyl phosphate. L-ornithine is bound by residues Asn165, Asp225, and 229–230 (SM). Residues 266-267 (CL) and Arg294 contribute to the carbamoyl phosphate site.

This sequence belongs to the aspartate/ornithine carbamoyltransferase superfamily. OTCase family.

The protein localises to the cytoplasm. It catalyses the reaction carbamoyl phosphate + L-ornithine = L-citrulline + phosphate + H(+). The protein operates within amino-acid biosynthesis; L-arginine biosynthesis; L-arginine from L-ornithine and carbamoyl phosphate: step 1/3. Functionally, reversibly catalyzes the transfer of the carbamoyl group from carbamoyl phosphate (CP) to the N(epsilon) atom of ornithine (ORN) to produce L-citrulline. The protein is Ornithine carbamoyltransferase of Cereibacter sphaeroides (strain ATCC 17029 / ATH 2.4.9) (Rhodobacter sphaeroides).